Here is a 69-residue protein sequence, read N- to C-terminus: Putative membrane protein insertion efficiency factor (69 aa).

It belongs to the UPF0161 family.

The protein resides in the cell membrane. Its function is as follows. Could be involved in insertion of integral membrane proteins into the membrane. The polypeptide is Putative membrane protein insertion efficiency factor (Caldanaerobacter subterraneus subsp. tengcongensis (strain DSM 15242 / JCM 11007 / NBRC 100824 / MB4) (Thermoanaerobacter tengcongensis)).